A 204-amino-acid chain; its full sequence is MDRVVLLLSVLSLGVSSQPITDSQHLFSIAVSRIQNLHLLAQRLFSNFESTLQTEDQRQLNKIFLQDFCNSDYIISPIDKHETQRSSVLKLLSISYRLVESWEFSSRFLSGGSALRNQISPRLSELKTGIQLLITANQDGAEMFSDVSALQLAPYGNFYQSLGGEELLRRNYELLACFKKDMHKVETYLTVAKCRLSPEANCTL.

Positions 1-17 (MDRVVLLLSVLSLGVSS) are cleaved as a signal peptide. Glutamine 18 is modified (pyrrolidone carboxylic acid). Disulfide bonds link cysteine 69–cysteine 177 and cysteine 194–cysteine 202.

This sequence belongs to the somatotropin/prolactin family.

Its subcellular location is the secreted. Growth hormone plays an important role in growth control and is involved in the regulation of several anabolic processes. Implicated as an osmoregulatory substance important for seawater adaptation. This Seriola quinqueradiata (Five-ray yellowtail) protein is Somatotropin (gh).